The primary structure comprises 541 residues: Cytochrome P450 67 (541 aa).

C479 lines the heme pocket.

The protein belongs to the cytochrome P450 family. Requires heme as cofactor.

The sequence is that of Cytochrome P450 67 (CYP67) from Uromyces fabae (Rust fungus).